Reading from the N-terminus, the 254-residue chain is CRISPR-associated endoribonuclease Cas6 1 (254 aa).

The Proton acceptor role is filled by tyrosine 32. The Proton donor role is filled by histidine 47.

This sequence belongs to the CRISPR-associated protein Cas6/Cse3/CasE family.

Functionally, CRISPR (clustered regularly interspaced short palindromic repeat) is an adaptive immune system that provides protection against mobile genetic elements (viruses, transposable elements and conjugative plasmids). CRISPR clusters contain sequences complementary to antecedent mobile elements and target invading nucleic acids. CRISPR clusters are transcribed and processed into CRISPR RNA (crRNA). This protein processes pre-crRNA into individual crRNA units. This Methanocaldococcus jannaschii (strain ATCC 43067 / DSM 2661 / JAL-1 / JCM 10045 / NBRC 100440) (Methanococcus jannaschii) protein is CRISPR-associated endoribonuclease Cas6 1 (cas6a).